We begin with the raw amino-acid sequence, 276 residues long: Nickel import system permease protein NikC (276 aa).

Helical transmembrane passes span 10 to 30 (LIFF…FFVS), 73 to 93 (LFVT…LGLF), 108 to 128 (FIDV…ASFF), 186 to 206 (IIPA…LYIS), and 238 to 258 (IMLI…NLTG). Residues 69–258 (ARSTLFVTVL…ITILIFNLTG (190 aa)) enclose the ABC transmembrane type-1 domain.

This sequence belongs to the binding-protein-dependent transport system permease family. OppBC subfamily. As to quaternary structure, the complex is composed of two ATP-binding proteins (NikD and NikE), two transmembrane proteins (NikB and NikC) and a solute-binding protein (NikA).

Its subcellular location is the cell membrane. Functionally, part of the ABC transporter complex NikABCDE (Opp2) involved in nickel import. Probably responsible for the translocation of the substrate across the membrane. In Staphylococcus aureus (strain bovine RF122 / ET3-1), this protein is Nickel import system permease protein NikC.